The primary structure comprises 422 residues: Adenosylhomocysteinase (422 aa).

Aspartate 129 and glutamate 154 together coordinate substrate. Residue 155-157 (TTT) coordinates NAD(+). Lysine 184 and aspartate 188 together coordinate substrate. NAD(+) contacts are provided by residues asparagine 189, 218–223 (GYGWCG), glutamate 241, asparagine 276, 297–299 (AGH), and asparagine 344.

It belongs to the adenosylhomocysteinase family. NAD(+) is required as a cofactor.

The protein resides in the cytoplasm. The catalysed reaction is S-adenosyl-L-homocysteine + H2O = L-homocysteine + adenosine. It functions in the pathway amino-acid biosynthesis; L-homocysteine biosynthesis; L-homocysteine from S-adenosyl-L-homocysteine: step 1/1. Its function is as follows. May play a key role in the regulation of the intracellular concentration of adenosylhomocysteine. The protein is Adenosylhomocysteinase of Pyrococcus abyssi (strain GE5 / Orsay).